The chain runs to 138 residues: NADH-quinone oxidoreductase subunit A 1 (138 aa).

3 helical membrane passes run 19–39 (FLPL…LLLA), 74–94 (FYLI…IFAW), and 103–123 (LAGL…LVWL).

It belongs to the complex I subunit 3 family. NDH-1 is composed of 14 different subunits. Subunits NuoA, H, J, K, L, M, N constitute the membrane sector of the complex.

The protein resides in the cell inner membrane. The catalysed reaction is a quinone + NADH + 5 H(+)(in) = a quinol + NAD(+) + 4 H(+)(out). NDH-1 shuttles electrons from NADH, via FMN and iron-sulfur (Fe-S) centers, to quinones in the respiratory chain. The immediate electron acceptor for the enzyme in this species is believed to be ubiquinone. Couples the redox reaction to proton translocation (for every two electrons transferred, four hydrogen ions are translocated across the cytoplasmic membrane), and thus conserves the redox energy in a proton gradient. In Geobacter metallireducens (strain ATCC 53774 / DSM 7210 / GS-15), this protein is NADH-quinone oxidoreductase subunit A 1.